Reading from the N-terminus, the 247-residue chain is Small ribosomal subunit protein uS2 (247 aa).

Belongs to the universal ribosomal protein uS2 family.

The protein is Small ribosomal subunit protein uS2 of Ectopseudomonas mendocina (strain ymp) (Pseudomonas mendocina).